The following is a 191-amino-acid chain: Large ribosomal subunit protein uL6B (191 aa).

This sequence belongs to the universal ribosomal protein uL6 family. As to quaternary structure, component of the large ribosomal subunit (LSU). Mature yeast ribosomes consist of a small (40S) and a large (60S) subunit. The 40S small subunit contains 1 molecule of ribosomal RNA (18S rRNA) and 33 different proteins (encoded by 57 genes). The large 60S subunit contains 3 rRNA molecules (25S, 5.8S and 5S rRNA) and 46 different proteins (encoded by 81 genes).

Its subcellular location is the cytoplasm. Its function is as follows. Component of the ribosome, a large ribonucleoprotein complex responsible for the synthesis of proteins in the cell. The small ribosomal subunit (SSU) binds messenger RNAs (mRNAs) and translates the encoded message by selecting cognate aminoacyl-transfer RNA (tRNA) molecules. The large subunit (LSU) contains the ribosomal catalytic site termed the peptidyl transferase center (PTC), which catalyzes the formation of peptide bonds, thereby polymerizing the amino acids delivered by tRNAs into a polypeptide chain. The nascent polypeptides leave the ribosome through a tunnel in the LSU and interact with protein factors that function in enzymatic processing, targeting, and the membrane insertion of nascent chains at the exit of the ribosomal tunnel. The polypeptide is Large ribosomal subunit protein uL6B (Saccharomyces cerevisiae (strain ATCC 204508 / S288c) (Baker's yeast)).